A 769-amino-acid polypeptide reads, in one-letter code: Apoptotic enhancer 1 protein (769 aa).

Disordered regions lie at residues 69–88 (PVRVVAQPPPPHPQALSQQY), 265–396 (SVEP…LDES), and 451–518 (PQLP…RSDD). Low complexity predominate over residues 275-284 (QQQQPSPQMM). Positions 285–295 (KSEEFSEKRDL) are enriched in basic and acidic residues. The segment covering 339 to 353 (STDPHSNHSSPSTSS) has biased composition (low complexity). Composition is skewed to polar residues over residues 354–378 (QKAPTLITFSPPSFEQKINSSTMTR), 453–467 (LPTSQEEPSAITSET), and 474–491 (NSESKQVATSSDSTNNLE). ANK repeat units follow at residues 585 to 617 (EGITALHNAICAGHYEIVRFLIENDADVNAQDS) and 618 to 652 (DGWTPLHCAASCNNLPMVRQLVEGGGCVLASTLSD). The region spanning 684–746 (INTGKVYAAY…PRTYLALYPS (63 aa)) is the SH3 domain.

This sequence belongs to the iASPP family. In terms of assembly, interacts with cep-1/p53; the interaction inhibits pro-apoptotic activity of cep-1.

The protein resides in the nucleus. Negetively regulates apoptosis via its interaction with cep-1. This is Apoptotic enhancer 1 protein from Caenorhabditis elegans.